A 210-amino-acid chain; its full sequence is Large ribosomal subunit protein uL4 (210 aa).

A disordered region spans residues F56 to S80.

This sequence belongs to the universal ribosomal protein uL4 family. As to quaternary structure, part of the 50S ribosomal subunit.

Its function is as follows. One of the primary rRNA binding proteins, this protein initially binds near the 5'-end of the 23S rRNA. It is important during the early stages of 50S assembly. It makes multiple contacts with different domains of the 23S rRNA in the assembled 50S subunit and ribosome. In terms of biological role, forms part of the polypeptide exit tunnel. In Solidesulfovibrio magneticus (strain ATCC 700980 / DSM 13731 / RS-1) (Desulfovibrio magneticus), this protein is Large ribosomal subunit protein uL4.